A 32-amino-acid chain; its full sequence is Conotoxin sr7a (32 aa).

3 disulfides stabilise this stretch: cysteine 1/cysteine 17, cysteine 8/cysteine 21, and cysteine 16/cysteine 31. Serine 32 carries the serine amide modification.

Expressed by the venom duct.

It is found in the secreted. Functionally, elicits hyperactivity when injected intracranially into mice and produces paralysis when injected into the pedal muscle of freshwater snails, Pomacea paludosa, but it has no apparent effect after intramuscular injection into the limpet Patella opea or the freshwater fish Lebistes reticulatus. In Conus spurius (Alphabet cone), this protein is Conotoxin sr7a.